The primary structure comprises 313 residues: Porphobilinogen deaminase (313 aa).

At C242 the chain carries S-(dipyrrolylmethanemethyl)cysteine.

Belongs to the HMBS family. Monomer. Dipyrromethane serves as cofactor.

It catalyses the reaction 4 porphobilinogen + H2O = hydroxymethylbilane + 4 NH4(+). It participates in porphyrin-containing compound metabolism; protoporphyrin-IX biosynthesis; coproporphyrinogen-III from 5-aminolevulinate: step 2/4. Its function is as follows. Tetrapolymerization of the monopyrrole PBG into the hydroxymethylbilane pre-uroporphyrinogen in several discrete steps. This is Porphobilinogen deaminase from Erwinia tasmaniensis (strain DSM 17950 / CFBP 7177 / CIP 109463 / NCPPB 4357 / Et1/99).